Reading from the N-terminus, the 446-residue chain is Golgi reassembly-stacking protein 1 (446 aa).

The segment at 1-20 (MGLGASSEQPAGGEGFHLHG) is disordered. Residue Gly-2 is the site of N-myristoyl glycine attachment. 2 consecutive PDZ GRASP-type domains span residues 14–104 (EGFH…FCSF) and 110–198 (HVWH…YGYL). The GRASP stretch occupies residues 14-214 (EGFHLHGVQE…PSSQHKKPPG (201 aa)). 3 residues coordinate Zn(2+): His-17, His-19, and Cys-102. Residues 189–201 (LGCGIGYGYLHRI) are essential for interaction with GOLGA2/GM130. Disordered regions lie at residues 202–252 (PTQP…LGSR) and 343–446 (VSGP…EPGL). Phosphothreonine is present on residues Thr-216, Thr-220, and Thr-224. Positions 343–354 (VSGPEDIGSSSS) are enriched in low complexity. A phosphoserine mark is found at Ser-365, Ser-367, and Ser-376.

It belongs to the GORASP family. Homodimer. Forms higher-order oligomers under interphase but not mitotic conditions. Dimers of the protein on one membrane might be able to interact with dimers on another and so stack cisternae. Interacts with the C-terminus of GOLGA2/GM130 under both mitotic and non-mitotic conditions. The interaction is critical for the correct targeting of both proteins to the cis-Golgi. Interacts with TMED2 and TMED3. Post-translationally, phosphorylated by CDC2/B1 and PLK kinases during mitosis. Phosphorylation cycle correlates with the cisternal stacking cycle. Phosphorylation of the homodimer prevents the association of dimers into higher-order oligomers, leading to cisternal unstacking. Target for caspase-3 cleavage during apoptosis. The cleavage contributes to Golgi fragmentation and occurs very early in the execution phase of apoptosis. In terms of processing, myristoylated.

It is found in the golgi apparatus. It localises to the cis-Golgi network membrane. Its function is as follows. Key structural protein of the Golgi apparatus. The membrane cisternae of the Golgi apparatus adhere to each other to form stacks, which are aligned side by side to form the Golgi ribbon. Acting in concert with GORASP2/GRASP55, is required for the formation and maintenance of the Golgi ribbon, and may be dispensable for the formation of stacks. However, other studies suggest that GORASP1 plays an important role in assembly and membrane stacking of the cisternae, and in the reassembly of Golgi stacks after breakdown during mitosis. Caspase-mediated cleavage of GORASP1 is required for fragmentation of the Golgi during apoptosis. Also mediates, via its interaction with GOLGA2/GM130, the docking of transport vesicles with the Golgi membranes. Mediates ER stress-induced unconventional (ER/Golgi-independent) trafficking of core-glycosylated CFTR to cell membrane. The sequence is that of Golgi reassembly-stacking protein 1 (Gorasp1) from Mus musculus (Mouse).